Consider the following 151-residue polypeptide: SsrA-binding protein (151 aa).

It belongs to the SmpB family.

Its subcellular location is the cytoplasm. Functionally, required for rescue of stalled ribosomes mediated by trans-translation. Binds to transfer-messenger RNA (tmRNA), required for stable association of tmRNA with ribosomes. tmRNA and SmpB together mimic tRNA shape, replacing the anticodon stem-loop with SmpB. tmRNA is encoded by the ssrA gene; the 2 termini fold to resemble tRNA(Ala) and it encodes a 'tag peptide', a short internal open reading frame. During trans-translation Ala-aminoacylated tmRNA acts like a tRNA, entering the A-site of stalled ribosomes, displacing the stalled mRNA. The ribosome then switches to translate the ORF on the tmRNA; the nascent peptide is terminated with the 'tag peptide' encoded by the tmRNA and targeted for degradation. The ribosome is freed to recommence translation, which seems to be the essential function of trans-translation. The protein is SsrA-binding protein of Nitrosomonas europaea (strain ATCC 19718 / CIP 103999 / KCTC 2705 / NBRC 14298).